A 157-amino-acid chain; its full sequence is Large ribosomal subunit protein uL15 (157 aa).

A disordered region spans residues 1 to 40 (MKLHELSDNPGATKKRMRIGRGPGSGKGKMGGRGIKGQKS). The segment covering 21–35 (RGPGSGKGKMGGRGI) has biased composition (gly residues).

This sequence belongs to the universal ribosomal protein uL15 family. Part of the 50S ribosomal subunit.

Functionally, binds to the 23S rRNA. This chain is Large ribosomal subunit protein uL15, found in Ruegeria pomeroyi (strain ATCC 700808 / DSM 15171 / DSS-3) (Silicibacter pomeroyi).